The following is a 624-amino-acid chain: Ferredoxin-fold anticodon-binding domain-containing protein 1 (624 aa).

Residues 531 to 624 (LYPPCYVHDV…IQQHLYVIPR (94 aa)) enclose the FDX-ACB domain.

The chain is Ferredoxin-fold anticodon-binding domain-containing protein 1 (FDXACB1) from Homo sapiens (Human).